The following is a 377-amino-acid chain: DNA replication and repair protein RecF (377 aa).

30–37 is an ATP binding site; that stretch reads GPNGQGKT.

Belongs to the RecF family.

The protein resides in the cytoplasm. Functionally, the RecF protein is involved in DNA metabolism; it is required for DNA replication and normal SOS inducibility. RecF binds preferentially to single-stranded, linear DNA. It also seems to bind ATP. The sequence is that of DNA replication and repair protein RecF from Thermobifida fusca (strain YX).